The following is a 188-amino-acid chain: Ribosome maturation factor RimM (188 aa).

Residues 98-174 (EGTFYYHDLR…HLTADAPAGL (77 aa)) form the PRC barrel domain. Residues 169–188 (DAPAGLIGPEPGEEDGAAES) form a disordered region. A compositionally biased stretch (acidic residues) spans 179 to 188 (PGEEDGAAES).

The protein belongs to the RimM family. Binds ribosomal protein uS19.

The protein localises to the cytoplasm. An accessory protein needed during the final step in the assembly of 30S ribosomal subunit, possibly for assembly of the head region. Essential for efficient processing of 16S rRNA. May be needed both before and after RbfA during the maturation of 16S rRNA. It has affinity for free ribosomal 30S subunits but not for 70S ribosomes. The polypeptide is Ribosome maturation factor RimM (Deinococcus radiodurans (strain ATCC 13939 / DSM 20539 / JCM 16871 / CCUG 27074 / LMG 4051 / NBRC 15346 / NCIMB 9279 / VKM B-1422 / R1)).